A 494-amino-acid chain; its full sequence is Cysteine--tRNA ligase (494 aa).

Cys-29 contacts Zn(2+). Positions 31–41 (VTVYDYCHLGH) match the 'HIGH' region motif. Zn(2+) is bound by residues Cys-216, His-241, and Glu-245. The 'KMSKS' region motif lies at 273–277 (KMSKS). Lys-276 serves as a coordination point for ATP.

It belongs to the class-I aminoacyl-tRNA synthetase family. As to quaternary structure, monomer. It depends on Zn(2+) as a cofactor.

It is found in the cytoplasm. It carries out the reaction tRNA(Cys) + L-cysteine + ATP = L-cysteinyl-tRNA(Cys) + AMP + diphosphate. In Cyanothece sp. (strain PCC 7425 / ATCC 29141), this protein is Cysteine--tRNA ligase.